We begin with the raw amino-acid sequence, 97 residues long: Large ribosomal subunit protein eL21 (97 aa).

This sequence belongs to the eukaryotic ribosomal protein eL21 family.

This chain is Large ribosomal subunit protein eL21, found in Methanococcus aeolicus (strain ATCC BAA-1280 / DSM 17508 / OCM 812 / Nankai-3).